A 156-amino-acid polypeptide reads, in one-letter code: Cyanate hydratase (156 aa).

Residues R96, E99, and S122 contribute to the active site.

The protein belongs to the cyanase family.

It carries out the reaction cyanate + hydrogencarbonate + 3 H(+) = NH4(+) + 2 CO2. Functionally, catalyzes the reaction of cyanate with bicarbonate to produce ammonia and carbon dioxide. In Burkholderia lata (strain ATCC 17760 / DSM 23089 / LMG 22485 / NCIMB 9086 / R18194 / 383), this protein is Cyanate hydratase.